Consider the following 668-residue polypeptide: tRNA 5-methylaminomethyl-2-thiouridine biosynthesis bifunctional protein MnmC (668 aa).

The tract at residues 1 to 245 (MKHYSIQPAN…KREMLCGVME (245 aa)) is tRNA (mnm(5)s(2)U34)-methyltransferase. Residues 270-668 (IGGGIASALL…LLKGKAVKAG (399 aa)) are FAD-dependent cmnm(5)s(2)U34 oxidoreductase.

In the N-terminal section; belongs to the methyltransferase superfamily. tRNA (mnm(5)s(2)U34)-methyltransferase family. The protein in the C-terminal section; belongs to the DAO family. The cofactor is FAD.

Its subcellular location is the cytoplasm. It catalyses the reaction 5-aminomethyl-2-thiouridine(34) in tRNA + S-adenosyl-L-methionine = 5-methylaminomethyl-2-thiouridine(34) in tRNA + S-adenosyl-L-homocysteine + H(+). Catalyzes the last two steps in the biosynthesis of 5-methylaminomethyl-2-thiouridine (mnm(5)s(2)U) at the wobble position (U34) in tRNA. Catalyzes the FAD-dependent demodification of cmnm(5)s(2)U34 to nm(5)s(2)U34, followed by the transfer of a methyl group from S-adenosyl-L-methionine to nm(5)s(2)U34, to form mnm(5)s(2)U34. This is tRNA 5-methylaminomethyl-2-thiouridine biosynthesis bifunctional protein MnmC from Escherichia coli (strain K12 / DH10B).